A 105-amino-acid polypeptide reads, in one-letter code: Signal peptidase complex subunit 1 (105 aa).

At M1 to Q32 the chain is on the cytoplasmic side. The chain crosses the membrane as a helical span at residues V33–S53. Topologically, residues Y54–M56 are lumenal. A helical membrane pass occupies residues F57 to L77. The Cytoplasmic portion of the chain corresponds to F78–K105.

The protein belongs to the SPCS1 family. Component of the signal peptidase complex (SPC) composed of a catalytic subunit sec-11 and three accessory subunits spcs-1, spcs-2 and spcs-3. The complex induces a local thinning of the ER membrane which is used to measure the length of the signal peptide (SP) h-region of protein substrates. This ensures the selectivity of the complex towards h-regions shorter than 18-20 amino acids.

The protein localises to the endoplasmic reticulum membrane. In terms of biological role, component of the signal peptidase complex (SPC) which catalyzes the cleavage of N-terminal signal sequences from nascent proteins as they are translocated into the lumen of the endoplasmic reticulum. Dispensable for SPC enzymatic activity. The protein is Signal peptidase complex subunit 1 of Caenorhabditis elegans.